Consider the following 80-residue polypeptide: Bowman-Birk type proteinase inhibitor (80 aa).

7 disulfide bridges follow: C19–C70, C20–C35, C23–C66, C25–C33, C41–C47, C44–C59, and C49–C57.

Occurs as a monomer, dimer or trimer. The dimer may be the active form. Binds calcium, probably through His-3 to His-6.

Functionally, protease inhibitor with activity against cysteine, aspartic and serine proteases. Highest activity against serine proteases, in particular trypsin and trypsin-like proteases. This chain is Bowman-Birk type proteinase inhibitor, found in Phaseolus acutifolius (Tepary bean).